The chain runs to 147 residues: MPVTVRVRRVGHRGPPLDLPRYESAGAAGLDLRADEPFTLAPGERRVVPTGLALELPPGHEGQVRPRSGLAARHGVGMVNAPGTIDADYRGEVGVILVNHGQAPVAFARGDRIAQLVIAPVVRAELELVDALTDSDRGAGGFGSTGQ.

Substrate contacts are provided by residues 67-69, N80, and 84-86; these read RSG and TID.

This sequence belongs to the dUTPase family. Mg(2+) is required as a cofactor.

The catalysed reaction is dUTP + H2O = dUMP + diphosphate + H(+). It functions in the pathway pyrimidine metabolism; dUMP biosynthesis; dUMP from dCTP (dUTP route): step 2/2. Functionally, this enzyme is involved in nucleotide metabolism: it produces dUMP, the immediate precursor of thymidine nucleotides and it decreases the intracellular concentration of dUTP so that uracil cannot be incorporated into DNA. In Anaeromyxobacter dehalogenans (strain 2CP-C), this protein is Deoxyuridine 5'-triphosphate nucleotidohydrolase.